A 363-amino-acid polypeptide reads, in one-letter code: Small ribosomal subunit biogenesis GTPase RsgA (363 aa).

The CP-type G domain occupies 112–268 (HQQVIAANID…LIDTPGMREL (157 aa)). GTP-binding positions include 157 to 160 (TKAD) and 210 to 218 (GSSGAGKST). Zn(2+)-binding residues include Cys291, Cys296, His298, and Cys304. The interval 340–363 (RVAQNNRGKGSGKRPASVDRPGRH) is disordered.

It belongs to the TRAFAC class YlqF/YawG GTPase family. RsgA subfamily. In terms of assembly, monomer. Associates with 30S ribosomal subunit, binds 16S rRNA. Zn(2+) is required as a cofactor.

The protein localises to the cytoplasm. Its function is as follows. One of several proteins that assist in the late maturation steps of the functional core of the 30S ribosomal subunit. Helps release RbfA from mature subunits. May play a role in the assembly of ribosomal proteins into the subunit. Circularly permuted GTPase that catalyzes slow GTP hydrolysis, GTPase activity is stimulated by the 30S ribosomal subunit. This Xanthomonas axonopodis pv. citri (strain 306) protein is Small ribosomal subunit biogenesis GTPase RsgA.